Here is a 355-residue protein sequence, read N- to C-terminus: Putative inositol monophosphatase 3 (355 aa).

The helical transmembrane segment at L16 to H36 threads the bilayer. Mg(2+)-binding residues include E127, D167, L169, D170, and D292. E127 is a binding site for substrate. Substrate contacts are provided by residues L169 to T172 and D292.

Belongs to the inositol monophosphatase superfamily. The cofactor is Mg(2+).

It localises to the membrane. It carries out the reaction a myo-inositol phosphate + H2O = myo-inositol + phosphate. Its pathway is polyol metabolism; myo-inositol biosynthesis; myo-inositol from D-glucose 6-phosphate: step 2/2. The sequence is that of Putative inositol monophosphatase 3 from Drosophila melanogaster (Fruit fly).